The chain runs to 363 residues: Phosphoserine aminotransferase (363 aa).

An L-glutamate-binding site is contributed by Arg-42. 4 residues coordinate pyridoxal 5'-phosphate: Trp-105, Thr-155, Asp-175, and Gln-198. Lys-199 is subject to N6-(pyridoxal phosphate)lysine. Residue 240–241 participates in pyridoxal 5'-phosphate binding; it reads NT.

It belongs to the class-V pyridoxal-phosphate-dependent aminotransferase family. SerC subfamily. In terms of assembly, homodimer. The cofactor is pyridoxal 5'-phosphate.

The protein resides in the cytoplasm. The catalysed reaction is O-phospho-L-serine + 2-oxoglutarate = 3-phosphooxypyruvate + L-glutamate. The enzyme catalyses 4-(phosphooxy)-L-threonine + 2-oxoglutarate = (R)-3-hydroxy-2-oxo-4-phosphooxybutanoate + L-glutamate. It participates in amino-acid biosynthesis; L-serine biosynthesis; L-serine from 3-phospho-D-glycerate: step 2/3. It functions in the pathway cofactor biosynthesis; pyridoxine 5'-phosphate biosynthesis; pyridoxine 5'-phosphate from D-erythrose 4-phosphate: step 3/5. Catalyzes the reversible conversion of 3-phosphohydroxypyruvate to phosphoserine and of 3-hydroxy-2-oxo-4-phosphonooxybutanoate to phosphohydroxythreonine. This is Phosphoserine aminotransferase from Janthinobacterium sp. (strain Marseille) (Minibacterium massiliensis).